The primary structure comprises 226 residues: Glycerol-3-phosphate acyltransferase (226 aa).

The next 6 membrane-spanning stretches (helical) occupy residues 1–21 (MGLWLSLCGAVVVVAYLLGSF), 56–76 (GPGAFVLGLDCLKGVLAIALV), 102–122 (LVTLAGIAAILGHSKSIFLGF), 134–154 (ILLAMNWQVGLATFGVFAVVV), 159–178 (IVSLSSIMGAIAVSIVMVVL), and 182–197 (LPYILFGIAGGLYVIL).

The protein belongs to the PlsY family. Probably interacts with PlsX.

Its subcellular location is the cell inner membrane. It catalyses the reaction an acyl phosphate + sn-glycerol 3-phosphate = a 1-acyl-sn-glycero-3-phosphate + phosphate. The protein operates within lipid metabolism; phospholipid metabolism. Functionally, catalyzes the transfer of an acyl group from acyl-phosphate (acyl-PO(4)) to glycerol-3-phosphate (G3P) to form lysophosphatidic acid (LPA). This enzyme utilizes acyl-phosphate as fatty acyl donor, but not acyl-CoA or acyl-ACP. In Trichormus variabilis (strain ATCC 29413 / PCC 7937) (Anabaena variabilis), this protein is Glycerol-3-phosphate acyltransferase.